Consider the following 449-residue polypeptide: Phosphoglucosamine mutase (449 aa).

Ser101 functions as the Phosphoserine intermediate in the catalytic mechanism. Ser101, Asp241, Asp243, and Asp245 together coordinate Mg(2+). A Phosphoserine modification is found at Ser101.

The protein belongs to the phosphohexose mutase family. It depends on Mg(2+) as a cofactor. Post-translationally, activated by phosphorylation.

It carries out the reaction alpha-D-glucosamine 1-phosphate = D-glucosamine 6-phosphate. In terms of biological role, catalyzes the conversion of glucosamine-6-phosphate to glucosamine-1-phosphate. This is Phosphoglucosamine mutase from Alkaliphilus oremlandii (strain OhILAs) (Clostridium oremlandii (strain OhILAs)).